The chain runs to 346 residues: Phosphate acyltransferase (346 aa).

Belongs to the PlsX family. As to quaternary structure, homodimer. Probably interacts with PlsY.

The protein resides in the cytoplasm. It catalyses the reaction a fatty acyl-[ACP] + phosphate = an acyl phosphate + holo-[ACP]. It participates in lipid metabolism; phospholipid metabolism. Its function is as follows. Catalyzes the reversible formation of acyl-phosphate (acyl-PO(4)) from acyl-[acyl-carrier-protein] (acyl-ACP). This enzyme utilizes acyl-ACP as fatty acyl donor, but not acyl-CoA. The sequence is that of Phosphate acyltransferase from Geotalea daltonii (strain DSM 22248 / JCM 15807 / FRC-32) (Geobacter daltonii).